Consider the following 220-residue polypeptide: UPF0758 protein APL_1970 (220 aa).

The region spanning 98-220 (NINEPYLAVM…YFSFEEEKFR (123 aa)) is the MPN domain. The Zn(2+) site is built by His169, His171, and Asp182. The short motif at 169 to 182 (HNHPSGNCTPSESD) is the JAMM motif element.

It belongs to the UPF0758 family.

The protein is UPF0758 protein APL_1970 of Actinobacillus pleuropneumoniae serotype 5b (strain L20).